The following is a 599-amino-acid chain: Elongation factor 4 (599 aa).

The tr-type G domain occupies 2 to 184; it reads KNIRNFSIIA…RLVRDIPPPE (183 aa). GTP contacts are provided by residues 14–19 and 131–134; these read DHGKST and NKID.

It belongs to the TRAFAC class translation factor GTPase superfamily. Classic translation factor GTPase family. LepA subfamily.

The protein resides in the cell inner membrane. The enzyme catalyses GTP + H2O = GDP + phosphate + H(+). Functionally, required for accurate and efficient protein synthesis under certain stress conditions. May act as a fidelity factor of the translation reaction, by catalyzing a one-codon backward translocation of tRNAs on improperly translocated ribosomes. Back-translocation proceeds from a post-translocation (POST) complex to a pre-translocation (PRE) complex, thus giving elongation factor G a second chance to translocate the tRNAs correctly. Binds to ribosomes in a GTP-dependent manner. The sequence is that of Elongation factor 4 from Sodalis glossinidius (strain morsitans).